Consider the following 149-residue polypeptide: MSSTILVIHGPNLNLLGKREPEVYGYLSLDDINQQLKTQAQASNISLETFQSNWEGAIVDRIHQAQIDGIQFILINPAALTHTSVAVRDALLGVAIPFIEVHLSNVHAREAFRHHSYLSDKAVGVICGFGAKGYHFALDYAIQKIQPST.

Y24 serves as the catalytic Proton acceptor. Residues N76, H82, and D89 each coordinate substrate. H102 serves as the catalytic Proton donor. Substrate-binding positions include 103-104 and R113; that span reads LS.

This sequence belongs to the type-II 3-dehydroquinase family. As to quaternary structure, homododecamer.

The enzyme catalyses 3-dehydroquinate = 3-dehydroshikimate + H2O. Its pathway is metabolic intermediate biosynthesis; chorismate biosynthesis; chorismate from D-erythrose 4-phosphate and phosphoenolpyruvate: step 3/7. Functionally, catalyzes a trans-dehydration via an enolate intermediate. The sequence is that of 3-dehydroquinate dehydratase from Acinetobacter baylyi (strain ATCC 33305 / BD413 / ADP1).